The chain runs to 156 residues: Arginine repressor (156 aa).

Belongs to the ArgR family.

The protein resides in the cytoplasm. The protein operates within amino-acid biosynthesis; L-arginine biosynthesis [regulation]. In terms of biological role, regulates arginine biosynthesis genes. The chain is Arginine repressor from Pectobacterium atrosepticum (strain SCRI 1043 / ATCC BAA-672) (Erwinia carotovora subsp. atroseptica).